We begin with the raw amino-acid sequence, 48 residues long: 4-carboxymuconolactone decarboxylase (48 aa).

Belongs to the carboxymuconolactone decarboxylase family.

It catalyses the reaction (R)-2-(carboxymethyl)-5-oxo-2,5-dihydro-2-furoate + H(+) = (4,5-dihydro-5-oxofuran-2-yl)-acetate + CO2. Its pathway is aromatic compound metabolism; beta-ketoadipate pathway; 5-oxo-4,5-dihydro-2-furylacetate from 3-carboxy-cis,cis-muconate: step 2/2. The polypeptide is 4-carboxymuconolactone decarboxylase (Pseudomonas putida (Arthrobacter siderocapsulatus)).